Consider the following 304-residue polypeptide: Carbonic anhydrase 5A, mitochondrial (304 aa).

Residues 1–34 constitute a mitochondrion transit peptide; that stretch reads MLRAKMLGRGPYKPLAILRHMGPLCATRPQHWRF. The Alpha-carbonic anhydrase domain occupies 35-295; the sequence is QHSYAEKHSN…LRGRNVRSSF (261 aa). Zn(2+)-binding residues include histidine 129, histidine 131, and histidine 154.

Belongs to the alpha-carbonic anhydrase family. It depends on Zn(2+) as a cofactor. In terms of tissue distribution, high in liver, also detected in heart, lung, kidney, spleen and intestine.

The protein localises to the mitochondrion. It carries out the reaction hydrogencarbonate + H(+) = CO2 + H2O. Its function is as follows. Mitochondrial carbonic anhydrase that catalyzes the reversible conversion of carbon dioxide to bicarbonate/HCO3. Mitochondria are impermeable to HCO3, and thus this intramitochondrial carbonic anhydrase is pivotal in providing HCO3 for multiple mitochondrial enzymes that catalyze the formation of essential metabolites of intermediary metabolism in the urea and Krebs cycles. The sequence is that of Carbonic anhydrase 5A, mitochondrial from Rattus norvegicus (Rat).